The chain runs to 301 residues: 1,5-anhydro-D-fructose reductase (301 aa).

Asp35 lines the NADP(+) pocket. Tyr40 serves as the catalytic Proton donor. Substrate is bound at residue His102. NADP(+) is bound by residues Gln175 and 246–258 (IPKS…IREN).

Belongs to the aldo/keto reductase family. As to quaternary structure, monomer.

The protein localises to the cytoplasm. It carries out the reaction 1,5-anhydro-D-glucitol + NADP(+) = 1,5-anhydro-D-fructose + NADPH + H(+). With respect to regulation, inhibited by p-chloromercuribenzoic acid and alkyliodines. Functionally, catalyzes the NADPH-dependent reduction of 1,5-anhydro-D-fructose (AF) to 1,5-anhydro-D-glucitol. This Mus musculus (Mouse) protein is 1,5-anhydro-D-fructose reductase (Akr1e2).